We begin with the raw amino-acid sequence, 62 residues long: Large ribosomal subunit protein bL28 (62 aa).

This sequence belongs to the bacterial ribosomal protein bL28 family.

The sequence is that of Large ribosomal subunit protein bL28 from Syntrophomonas wolfei subsp. wolfei (strain DSM 2245B / Goettingen).